The following is a 485-amino-acid chain: Cysteine--tRNA ligase (485 aa).

A Zn(2+)-binding site is contributed by C29. The 'HIGH' region motif lies at 31–41 (VTVYDHCHIGH). Zn(2+) contacts are provided by C209, H234, and E238. Residues 266–270 (KMSKS) carry the 'KMSKS' region motif. K269 is an ATP binding site.

The protein belongs to the class-I aminoacyl-tRNA synthetase family. Monomer. Zn(2+) is required as a cofactor.

It localises to the cytoplasm. The catalysed reaction is tRNA(Cys) + L-cysteine + ATP = L-cysteinyl-tRNA(Cys) + AMP + diphosphate. The protein is Cysteine--tRNA ligase of Geobacter metallireducens (strain ATCC 53774 / DSM 7210 / GS-15).